Reading from the N-terminus, the 457-residue chain is Phosphoglucosamine mutase (457 aa).

The Phosphoserine intermediate role is filled by S106. The Mg(2+) site is built by S106, D245, D247, and D249. Position 106 is a phosphoserine (S106).

Belongs to the phosphohexose mutase family. Mg(2+) serves as cofactor. In terms of processing, activated by phosphorylation.

It carries out the reaction alpha-D-glucosamine 1-phosphate = D-glucosamine 6-phosphate. Functionally, catalyzes the conversion of glucosamine-6-phosphate to glucosamine-1-phosphate. The polypeptide is Phosphoglucosamine mutase (Methylibium petroleiphilum (strain ATCC BAA-1232 / LMG 22953 / PM1)).